An 84-amino-acid chain; its full sequence is Large ribosomal subunit protein bL31B (84 aa).

The protein belongs to the bacterial ribosomal protein bL31 family. Type B subfamily. In terms of assembly, part of the 50S ribosomal subunit.

In Streptomyces griseus subsp. griseus (strain JCM 4626 / CBS 651.72 / NBRC 13350 / KCC S-0626 / ISP 5235), this protein is Large ribosomal subunit protein bL31B.